A 323-amino-acid chain; its full sequence is ATP synthase gamma chain (323 aa).

Belongs to the ATPase gamma chain family. In terms of assembly, F-type ATPases have 2 components, CF(1) - the catalytic core - and CF(0) - the membrane proton channel. CF(1) has five subunits: alpha(3), beta(3), gamma(1), delta(1), epsilon(1). CF(0) has three main subunits: a, b and c.

The protein localises to the cell inner membrane. Its function is as follows. Produces ATP from ADP in the presence of a proton gradient across the membrane. The gamma chain is believed to be important in regulating ATPase activity and the flow of protons through the CF(0) complex. This is ATP synthase gamma chain from Rickettsia rickettsii (strain Iowa).